Consider the following 246-residue polypeptide: Uridylate kinase (246 aa).

ATP is bound at residue 18 to 21; it reads KVSG. Gly-60 contributes to the UMP binding site. The ATP site is built by Gly-61 and Arg-65. Residues Asp-80 and 141-148 each bind UMP; that span reads TGNPFFTT. ATP is bound by residues Thr-168, Gln-169, Tyr-174, and Asp-177.

It belongs to the UMP kinase family. As to quaternary structure, homohexamer.

The protein localises to the cytoplasm. It catalyses the reaction UMP + ATP = UDP + ADP. It participates in pyrimidine metabolism; CTP biosynthesis via de novo pathway; UDP from UMP (UMPK route): step 1/1. Inhibited by UTP. Its function is as follows. Catalyzes the reversible phosphorylation of UMP to UDP. The chain is Uridylate kinase from Granulibacter bethesdensis (strain ATCC BAA-1260 / CGDNIH1).